Here is a 214-residue protein sequence, read N- to C-terminus: Adenylate kinase (214 aa).

10 to 15 (GAGKGT) is a binding site for ATP. The NMP stretch occupies residues 30-59 (STGDMLRAAVKAGTPLGLEAKKVMDAGQLV). AMP is bound by residues Thr31, Arg36, 57 to 59 (QLV), 85 to 88 (GFPR), and Gln92. The LID stretch occupies residues 122 to 159 (GRRVHPGSGRVYHVVFNPPKVEGKDDVTGEDLAIRPDD). ATP contacts are provided by residues Arg123 and 132–133 (VY). Positions 156 and 167 each coordinate AMP. Residue Gln200 participates in ATP binding.

It belongs to the adenylate kinase family. In terms of assembly, monomer.

The protein resides in the cytoplasm. The catalysed reaction is AMP + ATP = 2 ADP. Its pathway is purine metabolism; AMP biosynthesis via salvage pathway; AMP from ADP: step 1/1. Functionally, catalyzes the reversible transfer of the terminal phosphate group between ATP and AMP. Plays an important role in cellular energy homeostasis and in adenine nucleotide metabolism. The sequence is that of Adenylate kinase from Shewanella sp. (strain ANA-3).